The sequence spans 375 residues: Fructose-1,6-bisphosphate aldolase/phosphatase (375 aa).

The active-site Proton acceptor; for FBP phosphatase activity is Asp15. Mg(2+)-binding residues include Asp15, His22, Asp56, and Asp57. Residue His22 coordinates beta-D-fructose 1,6-bisphosphate. Residue His22 coordinates dihydroxyacetone phosphate. Tyr94 contacts beta-D-fructose 1,6-bisphosphate. Gln98 is a binding site for Mg(2+). 107 to 108 (GN) serves as a coordination point for beta-D-fructose 1,6-bisphosphate. Asp135 provides a ligand contact to Mg(2+). Lys136 contacts beta-D-fructose 1,6-bisphosphate. Lys136 contributes to the dihydroxyacetone phosphate binding site. Catalysis depends on Tyr237, which acts as the Proton donor/acceptor; for FBP aldolase activity. The Mg(2+) site is built by Lys240, Asp241, and Asp242. Lys240 (schiff-base intermediate with DHAP; for FBP aldolase activity) is an active-site residue. Beta-D-fructose 1,6-bisphosphate is bound by residues 250–251 (QS), Arg274, Asp295, and Tyr357. The dihydroxyacetone phosphate site is built by Arg274 and Asp295.

This sequence belongs to the FBP aldolase/phosphatase family. In terms of assembly, homooctamer; dimer of tetramers. Mg(2+) is required as a cofactor.

The catalysed reaction is beta-D-fructose 1,6-bisphosphate = D-glyceraldehyde 3-phosphate + dihydroxyacetone phosphate. It carries out the reaction beta-D-fructose 1,6-bisphosphate + H2O = beta-D-fructose 6-phosphate + phosphate. It participates in carbohydrate biosynthesis; gluconeogenesis. With respect to regulation, FBPase activity is inhibited by Ca(2+), ATP, ADP and phosphoenolpyruvate. In terms of biological role, catalyzes two subsequent steps in gluconeogenesis: the aldol condensation of dihydroxyacetone phosphate (DHAP) and glyceraldehyde-3-phosphate (GA3P) to fructose-1,6-bisphosphate (FBP), and the dephosphorylation of FBP to fructose-6-phosphate (F6P). Can also dephosphorylate, with lower activity, other related substrates including fructose-1-phosphate, fructose-6-phosphate, glucose-1-phosphate, glucose-6-phosphate, glycerol-2-phosphate, phosphoenolpyruvate, 5'-AMP, 6'-ADP and 7'-ATP. This Thermococcus onnurineus (strain NA1) protein is Fructose-1,6-bisphosphate aldolase/phosphatase.